The chain runs to 277 residues: NH(3)-dependent NAD(+) synthetase (277 aa).

46 to 53 (GISGGQDS) serves as a coordination point for ATP. Asp52 serves as a coordination point for Mg(2+). Arg142 provides a ligand contact to deamido-NAD(+). Thr162 contributes to the ATP binding site. Position 167 (Glu167) interacts with Mg(2+). 2 residues coordinate deamido-NAD(+): Lys175 and Asp182. Lys191 and Thr213 together coordinate ATP. Residue 263-264 (HK) coordinates deamido-NAD(+).

This sequence belongs to the NAD synthetase family. In terms of assembly, homodimer.

The enzyme catalyses deamido-NAD(+) + NH4(+) + ATP = AMP + diphosphate + NAD(+) + H(+). The protein operates within cofactor biosynthesis; NAD(+) biosynthesis; NAD(+) from deamido-NAD(+) (ammonia route): step 1/1. Functionally, catalyzes the ATP-dependent amidation of deamido-NAD to form NAD. Uses ammonia as a nitrogen source. The chain is NH(3)-dependent NAD(+) synthetase from Corynebacterium glutamicum (strain ATCC 13032 / DSM 20300 / JCM 1318 / BCRC 11384 / CCUG 27702 / LMG 3730 / NBRC 12168 / NCIMB 10025 / NRRL B-2784 / 534).